A 509-amino-acid chain; its full sequence is Kynureninase 1 (509 aa).

Residues leucine 154, threonine 155, 183 to 186 (FPSD), aspartate 270, histidine 273, and tyrosine 295 contribute to the pyridoxal 5'-phosphate site. Position 296 is an N6-(pyridoxal phosphate)lysine (lysine 296). The pyridoxal 5'-phosphate site is built by tryptophan 345 and asparagine 373.

This sequence belongs to the kynureninase family. As to quaternary structure, homodimer. It depends on pyridoxal 5'-phosphate as a cofactor.

Its subcellular location is the cytoplasm. The enzyme catalyses L-kynurenine + H2O = anthranilate + L-alanine + H(+). It catalyses the reaction 3-hydroxy-L-kynurenine + H2O = 3-hydroxyanthranilate + L-alanine + H(+). The protein operates within amino-acid degradation; L-kynurenine degradation; L-alanine and anthranilate from L-kynurenine: step 1/1. It functions in the pathway cofactor biosynthesis; NAD(+) biosynthesis; quinolinate from L-kynurenine: step 2/3. Its function is as follows. Catalyzes the cleavage of L-kynurenine (L-Kyn) and L-3-hydroxykynurenine (L-3OHKyn) into anthranilic acid (AA) and 3-hydroxyanthranilic acid (3-OHAA), respectively. The polypeptide is Kynureninase 1 (Chaetomium globosum (strain ATCC 6205 / CBS 148.51 / DSM 1962 / NBRC 6347 / NRRL 1970) (Soil fungus)).